A 225-amino-acid chain; its full sequence is Phosphoribosylformylglycinamidine synthase subunit PurQ (225 aa).

Positions 6-225 (FGVVVFPGSN…WQSILRSFAA (220 aa)) constitute a Glutamine amidotransferase type-1 domain. Cys89 (nucleophile) is an active-site residue. Catalysis depends on residues His198 and Glu200.

As to quaternary structure, part of the FGAM synthase complex composed of 1 PurL, 1 PurQ and 2 PurS subunits.

The protein localises to the cytoplasm. The enzyme catalyses N(2)-formyl-N(1)-(5-phospho-beta-D-ribosyl)glycinamide + L-glutamine + ATP + H2O = 2-formamido-N(1)-(5-O-phospho-beta-D-ribosyl)acetamidine + L-glutamate + ADP + phosphate + H(+). It catalyses the reaction L-glutamine + H2O = L-glutamate + NH4(+). The protein operates within purine metabolism; IMP biosynthesis via de novo pathway; 5-amino-1-(5-phospho-D-ribosyl)imidazole from N(2)-formyl-N(1)-(5-phospho-D-ribosyl)glycinamide: step 1/2. Part of the phosphoribosylformylglycinamidine synthase complex involved in the purines biosynthetic pathway. Catalyzes the ATP-dependent conversion of formylglycinamide ribonucleotide (FGAR) and glutamine to yield formylglycinamidine ribonucleotide (FGAM) and glutamate. The FGAM synthase complex is composed of three subunits. PurQ produces an ammonia molecule by converting glutamine to glutamate. PurL transfers the ammonia molecule to FGAR to form FGAM in an ATP-dependent manner. PurS interacts with PurQ and PurL and is thought to assist in the transfer of the ammonia molecule from PurQ to PurL. The chain is Phosphoribosylformylglycinamidine synthase subunit PurQ from Synechococcus sp. (strain JA-2-3B'a(2-13)) (Cyanobacteria bacterium Yellowstone B-Prime).